The following is a 407-amino-acid chain: Arginine biosynthesis bifunctional protein ArgJ (407 aa).

Residues threonine 155, lysine 181, threonine 192, glutamate 278, asparagine 402, and threonine 407 each coordinate substrate. Threonine 192 serves as the catalytic Nucleophile.

This sequence belongs to the ArgJ family. Heterotetramer of two alpha and two beta chains.

It localises to the cytoplasm. The catalysed reaction is N(2)-acetyl-L-ornithine + L-glutamate = N-acetyl-L-glutamate + L-ornithine. It catalyses the reaction L-glutamate + acetyl-CoA = N-acetyl-L-glutamate + CoA + H(+). Its pathway is amino-acid biosynthesis; L-arginine biosynthesis; L-ornithine and N-acetyl-L-glutamate from L-glutamate and N(2)-acetyl-L-ornithine (cyclic): step 1/1. The protein operates within amino-acid biosynthesis; L-arginine biosynthesis; N(2)-acetyl-L-ornithine from L-glutamate: step 1/4. Its function is as follows. Catalyzes two activities which are involved in the cyclic version of arginine biosynthesis: the synthesis of N-acetylglutamate from glutamate and acetyl-CoA as the acetyl donor, and of ornithine by transacetylation between N(2)-acetylornithine and glutamate. This Thiobacillus denitrificans (strain ATCC 25259 / T1) protein is Arginine biosynthesis bifunctional protein ArgJ.